A 178-amino-acid chain; its full sequence is Cytidylate kinase (178 aa).

7-15 (GLPGTGTTT) provides a ligand contact to ATP.

It belongs to the cytidylate kinase family. Type 2 subfamily.

Its subcellular location is the cytoplasm. The enzyme catalyses CMP + ATP = CDP + ADP. It catalyses the reaction dCMP + ATP = dCDP + ADP. The sequence is that of Cytidylate kinase from Methanococcus aeolicus (strain ATCC BAA-1280 / DSM 17508 / OCM 812 / Nankai-3).